The primary structure comprises 935 residues: Kinesin heavy chain (935 aa).

One can recognise a Kinesin motor domain in the interval 5–329 (NIKVVCRFRP…LRFGARAKSI (325 aa)). Residues 87–94 (GQTGSGKT) and 237–244 (GSEKVGKT) contribute to the ATP site. Positions 342-887 (AELKALLKKV…SQKSQNSLAA (546 aa)) form a coiled coil. Disordered stretches follow at residues 400–419 (APGF…TPVP) and 898–935 (RGNG…MNSR).

Belongs to the TRAFAC class myosin-kinesin ATPase superfamily. Kinesin family. Kinesin subfamily.

It localises to the cytoplasm. It is found in the cytoskeleton. Kinesin is a microtubule-associated force-producing protein that may play a role in organelle transport. Its motor activity is directed toward the microtubule's plus end. The speed of this motor is 4-5 times faster than its animal counterparts. The polypeptide is Kinesin heavy chain (Syncephalastrum racemosum (Filamentous fungus)).